Consider the following 228-residue polypeptide: ATP-dependent dethiobiotin synthetase BioD (228 aa).

13–18 (DVGKTV) is a binding site for ATP. Thr-17 contacts Mg(2+). Residue Lys-38 is part of the active site. ATP contacts are provided by residues Asp-55, 116 to 119 (EGAG), 176 to 177 (NR), and 205 to 207 (PYI). Mg(2+) contacts are provided by Asp-55 and Glu-116.

It belongs to the dethiobiotin synthetase family. In terms of assembly, homodimer. Mg(2+) serves as cofactor.

It is found in the cytoplasm. The enzyme catalyses (7R,8S)-7,8-diammoniononanoate + CO2 + ATP = (4R,5S)-dethiobiotin + ADP + phosphate + 3 H(+). The protein operates within cofactor biosynthesis; biotin biosynthesis; biotin from 7,8-diaminononanoate: step 1/2. Its function is as follows. Catalyzes a mechanistically unusual reaction, the ATP-dependent insertion of CO2 between the N7 and N8 nitrogen atoms of 7,8-diaminopelargonic acid (DAPA, also called 7,8-diammoniononanoate) to form a ureido ring. The polypeptide is ATP-dependent dethiobiotin synthetase BioD (Vibrio parahaemolyticus serotype O3:K6 (strain RIMD 2210633)).